Consider the following 131-residue polypeptide: UPF0102 protein YraN (131 aa).

Residues 1-19 (MATVPTRSGSPRQLTTKQT) show a composition bias toward polar residues. The disordered stretch occupies residues 1-20 (MATVPTRSGSPRQLTTKQTG).

Belongs to the UPF0102 family.

This Escherichia coli O8 (strain IAI1) protein is UPF0102 protein YraN.